Reading from the N-terminus, the 635-residue chain is Chaperone protein HtpG (635 aa).

The interval 1–346 is a; substrate-binding; the sequence is MSQTTTTSAS…SADLPLNVSR (346 aa). The b stretch occupies residues 347–563; it reads EILQESRDVR…QNELSPHLLR (217 aa). Residues 564–635 form a c region; the sequence is MLKAAGQEAP…KRLNGLLLKA (72 aa).

It belongs to the heat shock protein 90 family. Homodimer.

It localises to the cytoplasm. Its function is as follows. Molecular chaperone. Has ATPase activity. The polypeptide is Chaperone protein HtpG (Bordetella pertussis (strain Tohama I / ATCC BAA-589 / NCTC 13251)).